The following is a 206-amino-acid chain: Large ribosomal subunit protein uL4 (206 aa).

Residues 63–96 (MYKQKGTGRARHHSARAPQFRGGGKAHGPVVRSH) are disordered. Residues 64–77 (YKQKGTGRARHHSA) are compositionally biased toward basic residues.

The protein belongs to the universal ribosomal protein uL4 family. Part of the 50S ribosomal subunit.

Its function is as follows. One of the primary rRNA binding proteins, this protein initially binds near the 5'-end of the 23S rRNA. It is important during the early stages of 50S assembly. It makes multiple contacts with different domains of the 23S rRNA in the assembled 50S subunit and ribosome. In terms of biological role, forms part of the polypeptide exit tunnel. This chain is Large ribosomal subunit protein uL4, found in Allorhizobium ampelinum (strain ATCC BAA-846 / DSM 112012 / S4) (Agrobacterium vitis (strain S4)).